The sequence spans 500 residues: NAD(P)H-quinone oxidoreductase chain 4, chloroplastic (500 aa).

14 consecutive transmembrane segments (helical) span residues 4 to 24 (FPWL…ILFL), 37 to 57 (LCIC…HFQL), 84 to 104 (GISI…TLAA), 111 to 129 (SRVF…IGPF), 134 to 154 (LLLF…LLSM), 167 to 187 (FILY…GICL), 208 to 228 (ALEM…SPII), 242 to 262 (HYST…YGLV), 272 to 292 (AHSI…IYAA), 305 to 325 (IAYS…SIND), 330 to 350 (GAIL…FLAG), 386 to 406 (LALP…GILT), 416 to 436 (ILIT…SLSM), and 462 to 482 (FFVS…PDFV).

Belongs to the complex I subunit 4 family.

Its subcellular location is the plastid. It localises to the chloroplast thylakoid membrane. The catalysed reaction is a plastoquinone + NADH + (n+1) H(+)(in) = a plastoquinol + NAD(+) + n H(+)(out). The enzyme catalyses a plastoquinone + NADPH + (n+1) H(+)(in) = a plastoquinol + NADP(+) + n H(+)(out). The sequence is that of NAD(P)H-quinone oxidoreductase chain 4, chloroplastic from Morus indica (Mulberry).